A 159-amino-acid chain; its full sequence is ATP synthase subunit b (159 aa).

Residues 7–27 (TFVWTIINFLLLLVVLSYFLF) traverse the membrane as a helical segment.

This sequence belongs to the ATPase B chain family. As to quaternary structure, F-type ATPases have 2 components, F(1) - the catalytic core - and F(0) - the membrane proton channel. F(1) has five subunits: alpha(3), beta(3), gamma(1), delta(1), epsilon(1). F(0) has three main subunits: a(1), b(2) and c(10-14). The alpha and beta chains form an alternating ring which encloses part of the gamma chain. F(1) is attached to F(0) by a central stalk formed by the gamma and epsilon chains, while a peripheral stalk is formed by the delta and b chains.

It is found in the cell membrane. In terms of biological role, f(1)F(0) ATP synthase produces ATP from ADP in the presence of a proton or sodium gradient. F-type ATPases consist of two structural domains, F(1) containing the extramembraneous catalytic core and F(0) containing the membrane proton channel, linked together by a central stalk and a peripheral stalk. During catalysis, ATP synthesis in the catalytic domain of F(1) is coupled via a rotary mechanism of the central stalk subunits to proton translocation. Component of the F(0) channel, it forms part of the peripheral stalk, linking F(1) to F(0). The sequence is that of ATP synthase subunit b from Clostridium novyi (strain NT).